The chain runs to 120 residues: NAD(P)H-quinone oxidoreductase subunit 3, chloroplastic (120 aa).

3 consecutive transmembrane segments (helical) span residues 9–29 (IFWA…FISG), 64–84 (MFAL…PWAM), and 88–108 (VLGV…IVGS).

It belongs to the complex I subunit 3 family. NDH is composed of at least 16 different subunits, 5 of which are encoded in the nucleus.

The protein localises to the plastid. It localises to the chloroplast thylakoid membrane. It carries out the reaction a plastoquinone + NADH + (n+1) H(+)(in) = a plastoquinol + NAD(+) + n H(+)(out). It catalyses the reaction a plastoquinone + NADPH + (n+1) H(+)(in) = a plastoquinol + NADP(+) + n H(+)(out). Functionally, NDH shuttles electrons from NAD(P)H:plastoquinone, via FMN and iron-sulfur (Fe-S) centers, to quinones in the photosynthetic chain and possibly in a chloroplast respiratory chain. The immediate electron acceptor for the enzyme in this species is believed to be plastoquinone. Couples the redox reaction to proton translocation, and thus conserves the redox energy in a proton gradient. The sequence is that of NAD(P)H-quinone oxidoreductase subunit 3, chloroplastic from Vitis vinifera (Grape).